A 157-amino-acid chain; its full sequence is Transcription elongation factor GreA (157 aa).

The tract at residues 1–60 (MEKVPMTSAGFAALGEELKKRQSEDRPRIIEHIAEARSHGDLSENAEYHAAKEEQSHNEG) is disordered. Residues 16–60 (EELKKRQSEDRPRIIEHIAEARSHGDLSENAEYHAAKEEQSHNEG) show a composition bias toward basic and acidic residues. Residues 46 to 73 (AEYHAAKEEQSHNEGRIAELEDKLARAD) adopt a coiled-coil conformation.

This sequence belongs to the GreA/GreB family.

Functionally, necessary for efficient RNA polymerase transcription elongation past template-encoded arresting sites. The arresting sites in DNA have the property of trapping a certain fraction of elongating RNA polymerases that pass through, resulting in locked ternary complexes. Cleavage of the nascent transcript by cleavage factors such as GreA or GreB allows the resumption of elongation from the new 3'terminus. GreA releases sequences of 2 to 3 nucleotides. This is Transcription elongation factor GreA from Bradyrhizobium diazoefficiens (strain JCM 10833 / BCRC 13528 / IAM 13628 / NBRC 14792 / USDA 110).